The sequence spans 307 residues: Elongation factor Ts (307 aa).

Residues 80–83 (TDFV) form an involved in Mg(2+) ion dislocation from EF-Tu region.

Belongs to the EF-Ts family.

The protein resides in the cytoplasm. In terms of biological role, associates with the EF-Tu.GDP complex and induces the exchange of GDP to GTP. It remains bound to the aminoacyl-tRNA.EF-Tu.GTP complex up to the GTP hydrolysis stage on the ribosome. The polypeptide is Elongation factor Ts (Clostridium botulinum (strain Kyoto / Type A2)).